Here is a 237-residue protein sequence, read N- to C-terminus: Lectin alpha chain (237 aa).

Positions 8 and 10 each coordinate Mn(2+). Ca(2+)-binding residues include aspartate 10, tyrosine 12, asparagine 14, and aspartate 19. An a carbohydrate-binding site is contributed by tyrosine 12. Residues aspartate 19, histidine 24, and serine 34 each contribute to the Mn(2+) site. Residue 99–100 (LY) participates in a carbohydrate binding. Residue aspartate 208 participates in Ca(2+) binding. Arginine 228 is an a carbohydrate binding site.

This sequence belongs to the leguminous lectin family. As to quaternary structure, equilibrium between homodimer and homotetramer. Oligomerization is pH-dependent with homotetramers forming at pH 6.5 and above. In terms of processing, the beta and gamma chains are produced by partial proteolytic processing of the lectin alpha chain by an asparaginyl endopeptidase. Mixture of 60% alpha lectin and 40% of its beta and gamma proteolytic fragments.

D-mannose/D-glucose-binding lectin. Has anti-inflammatory activity in rats. Induces histamine release in mast cells from rat. Induces lymphocyte proliferation and IFNG production. This chain is Lectin alpha chain, found in Dioclea guianensis.